We begin with the raw amino-acid sequence, 239 residues long: tRNA (guanine-N(1)-)-methyltransferase (239 aa).

S-adenosyl-L-methionine is bound by residues Gly-109 and 128–133 (IGDYVL).

Belongs to the RNA methyltransferase TrmD family. In terms of assembly, homodimer.

The protein resides in the cytoplasm. The enzyme catalyses guanosine(37) in tRNA + S-adenosyl-L-methionine = N(1)-methylguanosine(37) in tRNA + S-adenosyl-L-homocysteine + H(+). Functionally, specifically methylates guanosine-37 in various tRNAs. The chain is tRNA (guanine-N(1)-)-methyltransferase from Thermus thermophilus (strain ATCC BAA-163 / DSM 7039 / HB27).